The sequence spans 803 residues: Putative metal ion transporter C27B12.12c (803 aa).

The segment covering 1–20 (MSFQQPSNGAQGGNNNALEK) has biased composition (polar residues). Residues 1-255 (MSFQQPSNGA…SSDVSGSDEN (255 aa)) form a disordered region. Low complexity predominate over residues 21–45 (TSSNEATSSSSTQVSSLSASGISVS). Residues 58-82 (MQVQSSQHLEANVQSPVSSQTTYAT) are compositionally biased toward polar residues. Basic residues-rich tracts occupy residues 105–123 (KPKK…RKKI) and 152–166 (QSNK…KHSP). 2 stretches are compositionally biased toward low complexity: residues 181–194 (ALSA…QHAS) and 218–253 (SSSS…SGSD). Residue Ser-318 is modified to Phosphoserine. 2 disordered regions span residues 326-349 (PRLK…QVDE) and 406-431 (FEPH…NNAE). The segment covering 337-347 (DNEDREVDSQV) has biased composition (acidic residues). The span at 406-419 (FEPHWNDLSPHDPN) shows a compositional bias: basic and acidic residues. A compositionally biased stretch (polar residues) spans 420-430 (DPSSSLHSNNA). Phosphoserine occurs at positions 449 and 452. 2 consecutive transmembrane segments (helical) span residues 745 to 765 (ITLI…FGMN) and 776 to 796 (LAWF…GWII).

The protein belongs to the CorA metal ion transporter (MIT) (TC 1.A.35) family.

It is found in the cytoplasm. It localises to the membrane. This is Putative metal ion transporter C27B12.12c from Schizosaccharomyces pombe (strain 972 / ATCC 24843) (Fission yeast).